The sequence spans 184 residues: NADH-quinone oxidoreductase subunit B (184 aa).

4 residues coordinate [4Fe-4S] cluster: Cys37, Cys38, Cys103, and Cys132.

Belongs to the complex I 20 kDa subunit family. As to quaternary structure, NDH-1 is composed of 14 different subunits. Subunits NuoB, C, D, E, F, and G constitute the peripheral sector of the complex. Requires [4Fe-4S] cluster as cofactor.

The protein localises to the cell membrane. It carries out the reaction a quinone + NADH + 5 H(+)(in) = a quinol + NAD(+) + 4 H(+)(out). Functionally, NDH-1 shuttles electrons from NADH, via FMN and iron-sulfur (Fe-S) centers, to quinones in the respiratory chain. The immediate electron acceptor for the enzyme in this species is believed to be a menaquinone. Couples the redox reaction to proton translocation (for every two electrons transferred, four hydrogen ions are translocated across the cytoplasmic membrane), and thus conserves the redox energy in a proton gradient. In Mycobacterium marinum (strain ATCC BAA-535 / M), this protein is NADH-quinone oxidoreductase subunit B.